The chain runs to 711 residues: MKQLFATTSRGFEELLKVELTELGAQEAKVVQGGVHYQADDETLYRTLLWSRLASRILFPLIETKIYSDLDLYAAVSGFNWLAQFDERVTFFVDFNGTNQEIRHTQFGAMRVKDGIVDYFERQGKTRPDVDKIQPDVRIHAYLNRENLVISLDLSGEALHLRGYREDAGQAPLRETLAAAIVMRSGWQVGSPLVDPMCGSGTLLIEAAQIEAKIAPQLYRLHWGFDFWKAHNQSAWEKVKNEAIELAEEKQSEIQPHFYGFDLDHRVLKKAQKNAQNGGVSHLIKWQQADVAALKNPRLNEVGTVICNPPYGERLGTTPALIALYSVFGQRLKKEFCGWNVSVFSSESTLLDCLRMRASRQFKAKNGPLDCVQKNYQVSERKSDAITDEKELEFNRTSEVAPDFANRLQKNIKKISKWAKQQELDAYRLYDADLPEYNLAVDRYADYIVVQEYAAPKNIDENKARQRLLDAVTATLQVTGVETNKLILKVRQKQKGTNQYEKLANKGEYFYVNEYGAQLWVNLTDYLDTGLFLDHRLTRKMIGELAKGKDFLNLFAYTGSATVHAALGGAKSTTTVDMSNTYLNWAEQNLILNDIEGKQHKLIQADCLQWLEKCDRQFDLIFVDPPTFSNSKRMEESWDVQRDHVKLMSNLKRVLSNNGTIVFSNNKRGFKMNLVALEELGLSAIEISHKTLPLDFERNKQIHNCWMIQHI.

Residues 43-154 form the THUMP domain; the sequence is TLYRTLLWSR…RENLVISLDL (112 aa).

Belongs to the methyltransferase superfamily. RlmKL family.

The protein localises to the cytoplasm. It catalyses the reaction guanosine(2445) in 23S rRNA + S-adenosyl-L-methionine = N(2)-methylguanosine(2445) in 23S rRNA + S-adenosyl-L-homocysteine + H(+). The catalysed reaction is guanosine(2069) in 23S rRNA + S-adenosyl-L-methionine = N(2)-methylguanosine(2069) in 23S rRNA + S-adenosyl-L-homocysteine + H(+). In terms of biological role, specifically methylates the guanine in position 2445 (m2G2445) and the guanine in position 2069 (m7G2069) of 23S rRNA. This is Ribosomal RNA large subunit methyltransferase K/L from Haemophilus influenzae (strain PittEE).